Consider the following 164-residue polypeptide: Crossover junction endodeoxyribonuclease RuvC (164 aa).

Catalysis depends on residues D7, E67, and D140. The Mg(2+) site is built by D7, E67, and D140.

This sequence belongs to the RuvC family. As to quaternary structure, homodimer which binds Holliday junction (HJ) DNA. The HJ becomes 2-fold symmetrical on binding to RuvC with unstacked arms; it has a different conformation from HJ DNA in complex with RuvA. In the full resolvosome a probable DNA-RuvA(4)-RuvB(12)-RuvC(2) complex forms which resolves the HJ. Mg(2+) is required as a cofactor.

Its subcellular location is the cytoplasm. It catalyses the reaction Endonucleolytic cleavage at a junction such as a reciprocal single-stranded crossover between two homologous DNA duplexes (Holliday junction).. In terms of biological role, the RuvA-RuvB-RuvC complex processes Holliday junction (HJ) DNA during genetic recombination and DNA repair. Endonuclease that resolves HJ intermediates. Cleaves cruciform DNA by making single-stranded nicks across the HJ at symmetrical positions within the homologous arms, yielding a 5'-phosphate and a 3'-hydroxyl group; requires a central core of homology in the junction. The consensus cleavage sequence is 5'-(A/T)TT(C/G)-3'. Cleavage occurs on the 3'-side of the TT dinucleotide at the point of strand exchange. HJ branch migration catalyzed by RuvA-RuvB allows RuvC to scan DNA until it finds its consensus sequence, where it cleaves and resolves the cruciform DNA. The sequence is that of Crossover junction endodeoxyribonuclease RuvC from Chloroflexus aurantiacus (strain ATCC 29364 / DSM 637 / Y-400-fl).